The chain runs to 550 residues: Luciferin 4-monooxygenase (550 aa).

Residues 548–550 carry the Microbody targeting signal motif; sequence SKL.

Belongs to the ATP-dependent AMP-binding enzyme family. Mg(2+) is required as a cofactor.

It is found in the peroxisome. It catalyses the reaction firefly D-luciferin + ATP + O2 = firefly oxyluciferin + hnu + AMP + CO2 + diphosphate. Functionally, produces green light with a wavelength of 562 nm. The chain is Luciferin 4-monooxygenase from Photinus pyralis (Common eastern firefly).